A 205-amino-acid polypeptide reads, in one-letter code: Cytochrome c biogenesis ATP-binding export protein CcmA (205 aa).

An ABC transporter domain is found at 2 to 204; it reads LEVSNLTAIR…SPKLRKIKLG (203 aa). 34–41 provides a ligand contact to ATP; sequence GRNGTGKT.

It belongs to the ABC transporter superfamily. CcmA exporter (TC 3.A.1.107) family. In terms of assembly, the complex is composed of two ATP-binding proteins (CcmA) and two transmembrane proteins (CcmB).

The protein resides in the cell inner membrane. It carries out the reaction heme b(in) + ATP + H2O = heme b(out) + ADP + phosphate + H(+). In terms of biological role, part of the ABC transporter complex CcmAB involved in the biogenesis of c-type cytochromes; once thought to export heme, this seems not to be the case, but its exact role is uncertain. Responsible for energy coupling to the transport system. This Vibrio parahaemolyticus serotype O3:K6 (strain RIMD 2210633) protein is Cytochrome c biogenesis ATP-binding export protein CcmA.